We begin with the raw amino-acid sequence, 240 residues long: PF03932 family protein CutC (240 aa).

This sequence belongs to the CutC family.

The protein localises to the cytoplasm. The sequence is that of PF03932 family protein CutC from Xanthomonas campestris pv. campestris (strain 8004).